The following is a 210-amino-acid chain: Thymidylate kinase (210 aa).

10–17 (GLEGAGKS) provides a ligand contact to ATP.

This sequence belongs to the thymidylate kinase family.

It catalyses the reaction dTMP + ATP = dTDP + ADP. Its function is as follows. Phosphorylation of dTMP to form dTDP in both de novo and salvage pathways of dTTP synthesis. The sequence is that of Thymidylate kinase from Haemophilus influenzae (strain PittGG).